The sequence spans 489 residues: L-asparagine permease (489 aa).

The next 12 membrane-spanning stretches (helical) occupy residues 38-58 (HVNMIAIGGAIGTGLFLGAGG), 62-82 (DAGPALAIAYLVAGVFAFFVV), 113-133 (VAGWMYFLNWSTTGIADITAI), 150-170 (VLALVALAVVLAVNLISVKIF), 175-195 (FWFAIVKVATLVGFMLIGIFL), 223-243 (VMPVVLVMQGVIFSYAALELV), 268-288 (VALFYVGSVVLLALLLPSSLY), 302-322 (IGVPAAGDVMNLVVLTAAMSS), 357-377 (YGGILLTCAVCVLGVGLNYLV), 382-402 (FEIVLNVASLGIISTWVIIMI), 426-446 (SPVTEIVTIAFLLAVVGLMWN), and 452-472 (RKTVLLVPVIAVMLVAGWFGV).

This sequence belongs to the amino acid-polyamine-organocation (APC) superfamily. Amino acid transporter (AAT) (TC 2.A.3.1) family.

Its subcellular location is the cell membrane. The polypeptide is L-asparagine permease (ansP) (Streptomyces coelicolor (strain ATCC BAA-471 / A3(2) / M145)).